A 379-amino-acid polypeptide reads, in one-letter code: Alcohol dehydrogenase 2 (379 aa).

The Zn(2+) site is built by Cys-47, Thr-49, His-69, Cys-99, Cys-102, Cys-105, Cys-113, and Cys-177. An alcohol contacts are provided by Thr-49 and His-69. Thr-49 serves as a coordination point for NAD(+). NAD(+) is bound by residues 202–207 (GLGAVG), Asp-226, Lys-231, Thr-272, Val-295, 295–297 (VGV), Phe-322, and Arg-372.

The protein belongs to the zinc-containing alcohol dehydrogenase family. In terms of assembly, homodimer. It depends on Zn(2+) as a cofactor.

It localises to the cytoplasm. It carries out the reaction a primary alcohol + NAD(+) = an aldehyde + NADH + H(+). The enzyme catalyses a secondary alcohol + NAD(+) = a ketone + NADH + H(+). The sequence is that of Alcohol dehydrogenase 2 (ADH2) from Zea mays (Maize).